Here is a 440-residue protein sequence, read N- to C-terminus: Fibulin-7 (440 aa).

The N-terminal stretch at 1–24 is a signal peptide; it reads MGPGSQRALFLLLLLLASPGARAF. A coiled-coil region spans residues 28-73; that stretch reads LNKQQLLTTIRQLQQLLKGQETRFTEGIRNMKSRLAALQNTVNKMT. The Sushi domain occupies 79–136; that stretch reads VSCPALEAPPDGKKFGSKYLVDHEVYFTCNPGFQLVGPSSVVCLANGSWTGEQPRCRD. Cystine bridges form between Cys81-Cys121, Cys107-Cys134, Cys140-Cys151, Cys145-Cys160, Cys162-Cys171, Cys229-Cys245, Cys241-Cys254, Cys256-Cys269, Cys275-Cys288, Cys282-Cys297, and Cys302-Cys319. Asn124 is a glycosylation site (N-linked (GlcNAc...) asparagine). One can recognise an EGF-like 1; calcium-binding domain in the interval 136-172; it reads DISECSSQPCHNGGTCVEGINHYRCICPPGKTGNRCQ. An EGF-like 2; calcium-binding domain is found at 225–270; sequence DVNECEIYGQKGRPRLCMHACVNTPGSYRCTCPSGYRILADGKSCE. The region spanning 271 to 320 is the EGF-like 3; calcium-binding domain; it reads DVDECAGPQHMCPRGTTCINTGGGFQCVNPECPEGSGNISYVKTSPFQCE. An N-linked (GlcNAc...) asparagine glycan is attached at Asn308.

It belongs to the fibulin family. As to quaternary structure, interacts with heparin, FBLN1, FN1 and DSPP. Preferentially binds dental mesenchyme cells and odontoblasts but not dental epithelial cells or nondental cells. Binding requires a heparan sulfate-containing receptor on the cell surface as well as an integrin. In terms of processing, N-glycosylated. Highly expressed in newborn incisors and molars. A weaker expression is seen in the brain, kidneys, muscles and bones.

It localises to the secreted. It is found in the extracellular space. Its subcellular location is the extracellular matrix. Functionally, an adhesion molecule that interacts with extracellular matrix molecules in developing teeth and may play important roles in differentiation and maintenance of odontoblasts as well as in dentin formation. The sequence is that of Fibulin-7 (Fbln7) from Mus musculus (Mouse).